The chain runs to 296 residues: Maltose/maltodextrin transport system permease protein MalG (296 aa).

The Cytoplasmic segment spans residues 1-12; sequence MAMVQPKSQKWR. Residues 13 to 35 form a helical membrane-spanning segment; the sequence is LLATHLLMFTFIAMILFPLLMVI. Residues 36 to 88 lie on the Periplasmic side of the membrane; sequence TISLRPGNFATGSLIPENISWEHWKLALGYSVVSPDGRVTPPPFPVMLWLWNS. In terms of domain architecture, ABC transmembrane type-1 spans 85–281; it reads LWNSVKVAFI…LPITIVFLVA (197 aa). Residues 89-111 traverse the membrane as a helical segment; sequence VKVAFITAVGIVTLSTTCAYAFA. Residues 112–123 are Cytoplasmic-facing; it reads RMHFRGKSTLLK. A helical transmembrane segment spans residues 124 to 143; that stretch reads GMLIFQMFPAVLSLVALYAL. The Periplasmic segment spans residues 144 to 152; it reads FDRLGEYVP. The chain crosses the membrane as a helical span at residues 153–175; it reads FIGLNTHGGVIFAYLGGIALHVW. At 176 to 205 the chain is on the cytoplasmic side; the sequence is TIKGYFETIDGSLEEAAALDGATPWQAFRM. Residues 206–228 form a helical membrane-spanning segment; the sequence is VLLPLSVPILAVVFILSFIGVIT. The Periplasmic segment spans residues 229–257; it reads EVPVASLLLRDVNNYTLAVGMQQYLNPQN. A helical membrane pass occupies residues 258–280; that stretch reads YLWGDFAAAAVLSALPITIVFLV. Residues 281 to 296 are Cytoplasmic-facing; that stretch reads AQRWLVSGLTAGGVKG.

The protein belongs to the binding-protein-dependent transport system permease family. MalFG subfamily. As to quaternary structure, the complex is composed of two ATP-binding proteins (MalK), two transmembrane proteins (MalG and MalF) and a solute-binding protein (MalE).

It is found in the cell inner membrane. Functionally, part of the ABC transporter complex MalEFGK involved in maltose/maltodextrin import. Probably responsible for the translocation of the substrate across the membrane. The polypeptide is Maltose/maltodextrin transport system permease protein MalG (malG) (Photorhabdus laumondii subsp. laumondii (strain DSM 15139 / CIP 105565 / TT01) (Photorhabdus luminescens subsp. laumondii)).